A 409-amino-acid chain; its full sequence is NADH-quinone oxidoreductase subunit 4 (409 aa).

It belongs to the complex I 49 kDa subunit family. In terms of assembly, NDH-1 is composed of 15 different subunits, Nqo1 to Nqo15. The complex has a L-shaped structure, with the hydrophobic arm (subunits Nqo7, Nqo8 and Nqo10 to Nqo14) embedded in the membrane and the hydrophilic peripheral arm (subunits Nqo1 to Nqo6, Nqo9 and Nqo15) protruding into the bacterial cytoplasm. The hydrophilic domain contains all the redox centers. This subunit interacts extensively with Nqo6.

The protein localises to the cell membrane. It carries out the reaction a quinone + NADH + 5 H(+)(in) = a quinol + NAD(+) + 4 H(+)(out). Its function is as follows. NDH-1 shuttles electrons from NADH, via FMN and iron-sulfur (Fe-S) centers, to quinones in the respiratory chain. The immediate electron acceptor for the enzyme in this species is menaquinone. Couples the redox reaction to proton translocation (for every two electrons transferred, four hydrogen ions are translocated across the cytoplasmic membrane), and thus conserves the redox energy in a proton gradient required for the synthesis of ATP. The Nqo4 subunit may contain the quinone-binding site. The sequence is that of NADH-quinone oxidoreductase subunit 4 (nqo4) from Thermus thermophilus (strain ATCC 27634 / DSM 579 / HB8).